Consider the following 334-residue polypeptide: HTH-type transcriptional repressor PurR (334 aa).

An HTH lacI-type domain is found at 2-56 (ATIKDVARLAGVSTTTVSHVINKTRFVAEATQEKVNKAVDELNYAPSAVARSLKC). The segment at residues 4–23 (IKDVARLAGVSTTTVSHVIN) is a DNA-binding region (H-T-H motif). Residues 48–56 (SAVARSLKC) mediate DNA binding. The hypoxanthine site is built by Phe-73, Lys-189, Phe-220, and Asp-274.

Homodimer.

It participates in purine metabolism; purine nucleotide biosynthesis [regulation]. In terms of biological role, is the main repressor of the genes involved in the de novo synthesis of purine nucleotides, regulating purB, purC, purEK, purF, purHD, purL, purMN and guaBA expression. PurR is allosterically activated to bind its cognate DNA by binding the purine corepressors, hypoxanthine or guanine, thereby effecting transcription repression. In Vibrio atlanticus (strain LGP32) (Vibrio splendidus (strain Mel32)), this protein is HTH-type transcriptional repressor PurR.